The primary structure comprises 103 residues: Flagellar hook-basal body complex protein FliE (103 aa).

Belongs to the FliE family.

The protein localises to the bacterial flagellum basal body. The chain is Flagellar hook-basal body complex protein FliE from Erwinia tasmaniensis (strain DSM 17950 / CFBP 7177 / CIP 109463 / NCPPB 4357 / Et1/99).